Here is a 121-residue protein sequence, read N- to C-terminus: MARIAGIDIPSDKRVVIALTYIYGLGKKLSQKILNELNISHDIRVKNLTEQQLSSLRSEITKYSVEGDLRREVTLNIKRLMEIGVYRGLRHRKGLPVRGQKTRNNAHTVKGKPKSIAGKKK.

The disordered stretch occupies residues 98 to 121; sequence RGQKTRNNAHTVKGKPKSIAGKKK. Positions 109-121 are enriched in basic residues; sequence VKGKPKSIAGKKK.

It belongs to the universal ribosomal protein uS13 family. In terms of assembly, part of the 30S ribosomal subunit. Forms a loose heterodimer with protein S19. Forms two bridges to the 50S subunit in the 70S ribosome.

Its function is as follows. Located at the top of the head of the 30S subunit, it contacts several helices of the 16S rRNA. In the 70S ribosome it contacts the 23S rRNA (bridge B1a) and protein L5 of the 50S subunit (bridge B1b), connecting the 2 subunits; these bridges are implicated in subunit movement. Contacts the tRNAs in the A and P-sites. This is Small ribosomal subunit protein uS13 from Phytoplasma australiense.